The sequence spans 131 residues: MAMTDPLGDMLTRIRNGQQAKKDSVLSPASKLRANVLEVLQREGYIRGYSEDASGKHAALRIELKYFEGEPAIKHVARVSKPGRRIYSGSKELPTVRNGLGITIVSTPKGVLSDNEARTQNVGGEVLAEVF.

The protein belongs to the universal ribosomal protein uS8 family. In terms of assembly, part of the 30S ribosomal subunit. Contacts proteins S5 and S12.

One of the primary rRNA binding proteins, it binds directly to 16S rRNA central domain where it helps coordinate assembly of the platform of the 30S subunit. The polypeptide is Small ribosomal subunit protein uS8 (Erythrobacter litoralis (strain HTCC2594)).